The primary structure comprises 3707 residues: Basement membrane-specific heparan sulfate proteoglycan core protein (3707 aa).

A signal peptide spans 1–21 (MGQRAVGSLLLGLLLHARLLA). 3 O-linked (Xyl...) (heparan sulfate) serine glycosylation sites follow: S65, S71, and S76. One can recognise an SEA domain in the interval 80–191 (QMVYFRALVN…WGFKFRRLGT (112 aa)). N89 carries N-linked (GlcNAc...) asparagine glycosylation. 4 consecutive LDL-receptor class A domains span residues 195–234 (FPRV…ELNC), 281–319 (GPSA…ELGC), 320–359 (ASPP…EANC), and 360–403 (SVKQ…EFGC). 13 disulfides stabilise this stretch: C199-C212, C206-C225, C219-C234, C285-C297, C292-C310, C304-C319, C325-C337, C332-C350, C344-C359, C368-C381, C375-C394, C388-C403, and C428-C479. N-linked (GlcNAc...) asparagine glycosylation is present at N358. Residues 404-504 (MPPQVVTPPQ…VLELVPQRGP (101 aa)) enclose the Ig-like C2-type 1 domain. In terms of domain architecture, Laminin EGF-like 1; first part spans 521–530 (CFCFGVTNVC). A Laminin IV type A 1 domain is found at 538–730 (DQIRLSFDQP…IHGRAHSVEE (193 aa)). Residue N554 is glycosylated (N-linked (GlcNAc...) asparagine). One can recognise a Laminin EGF-like 1; second part domain in the interval 731-763 (CRCPIGYSGLSCESCDAHFTRVPGGPYLGTCSG). Cystine bridges form between C764/C773, C766/C780, C783/C792, C795/C811, C814/C829, C816/C839, C842/C851, C854/C869, C879/C892, C894/C903, and C906/C921. Laminin EGF-like domains are found at residues 764–813 (CNCN…ACRP) and 814–871 (CPCP…KCRP). The Laminin EGF-like 4; truncated domain maps to 879 to 923 (CDERGSLGTSGETCRCKNNVVGRLCNECSDGSFHLSKQNPDGCLK). Residues 924-933 (CFCMGVSRQC) enclose the Laminin EGF-like 5; first part domain. A Laminin IV type A 2 domain is found at 941-1125 (AQVLGASEQP…GQDSAREVEQ (185 aa)). The Laminin EGF-like 5; second part domain maps to 1126-1158 (CTCPPGYRGPSCQDCDTGYTRVPSGLYLGTCER). Intrachain disulfides connect C1159/C1168, C1161/C1175, C1178/C1187, C1190/C1206, C1209/C1224, C1211/C1234, C1237/C1246, C1249/C1263, C1275/C1287, C1277/C1293, C1295/C1304, and C1307/C1322. Laminin EGF-like domains lie at 1159–1208 (CNCH…DCQP), 1209–1265 (CPCY…PCHR), and 1275–1324 (CGCD…GCLP). A Laminin EGF-like 9; first part domain is found at 1325–1334 (CFCMGVTQQC). The Laminin IV type A 3 domain occupies 1344-1529 (ISTHFAPGDF…SGPRALEVEE (186 aa)). The 33-residue stretch at 1530 to 1562 (CRCPPGYVGLSCQDCAPGYTRTGSGLYLGQCEL) folds into the Laminin EGF-like 9; second part domain. Cystine bridges form between C1563-C1572, C1565-C1579, C1582-C1591, C1594-C1610, C1613-C1628, C1615-C1638, C1641-C1650, and C1653-C1668. Laminin EGF-like domains are found at residues 1563–1612 (CECN…DCQP) and 1613–1670 (CACP…RCQP). Ig-like C2-type domains lie at 1677-1771 (EVQI…KPIM), 1772-1865 (VTVE…STAP), 1866-1954 (VASI…GGSG), 1955-2049 (PRVQ…PAPA), 2050-2148 (SPAP…PGVV), 2149-2244 (PPIR…PAPG), 2245-2343 (LAQP…RLRS), 2344-2436 (PVIS…PPTV), 2437-2532 (SVLP…APGT), 2533-2619 (PQVQ…VESP), 2620-2720 (PYAT…GGST), 2721-2809 (PTVQ…ALPS), 2810-2895 (VLIN…LVQA), and 2896-2980 (LPQI…LQVP). Residues 1713–1733 (DGRPLPSSAQQRHQGSELHFP) are disordered. 3 disulfides stabilise this stretch: C1792–C1839, C1886–C1932, and C1976–C2021. A disordered region spans residues 2039–2061 (SPSTNSPPAPASPAPIRIESSSS). Residues 2052–2061 (APIRIESSSS) are compositionally biased toward low complexity. Intrachain disulfides connect C2073-C2118, C2170-C2215, and C2268-C2313. 3 N-linked (GlcNAc...) asparagine glycosylation sites follow: N2336, N2394, and N2427. C2365 and C2413 are disulfide-bonded. Disulfide bonds link C2456–C2506 and C2554–C2599. A glycan (N-linked (GlcNAc...) asparagine) is linked at N2600. A disulfide bridge links C2641 with C2686. 2 disulfides stabilise this stretch: C2831-C2876 and C2917-C2962. Positions 2984–3162 (IPYFTQTPYS…VNLTTHGISH (179 aa)) constitute a Laminin G-like 1 domain. N-linked (GlcNAc...) asparagine glycans are attached at residues N3098 and N3154. Disulfide bonds link C3137/C3163, C3166/C3177, C3171/C3187, C3204/C3216, and C3229/C3238. The EGF-like domain occupies 3163-3241 (CPTCQDRPCQ…GRSGVRCEEG (79 aa)). The 181-residue stretch at 3245–3425 (TTPSMSGAGS…VGQCYDSSPC (181 aa)) folds into the Laminin G-like 2 domain. A glycan (N-linked (GlcNAc...) asparagine) is linked at N3385. Intrachain disulfides connect C3393-C3419, C3425-C3436, C3430-C3446, C3448-C3457, C3464-C3476, C3470-C3481, and C3483-C3492. A glycan (O-linked (Xyl...) (chondroitin sulfate) serine) is linked at S3510. Positions 3518–3705 (QYGAYFYDNG…AQAGANTRPC (188 aa)) constitute a Laminin G-like 3 domain. Residues D3574 and L3591 each coordinate Ca(2+). The tract at residues 3615-3617 (LRE) is mediates motor neuron attachment. 2 residues coordinate Ca(2+): A3641 and N3643. An intrachain disulfide couples C3671 to C3705. The tract at residues 3680–3707 (ARPGAPPPQPLDLQHRAQAGANTRPCPS) is disordered.

In terms of assembly, has a strong tendency to aggregate in dimers or stellate structures. Interacts with other basement membrane components such as laminin, prolargin and collagen type IV. Interacts with COL13A1. Interacts with FGFBP1. Interacts with VWA1. Interacts (via C-terminus) with ECM1 (via C-terminus). Interacts with SVEP1. Proteolytic processing produces the C-terminal angiogenic peptide, endorepellin. This peptide can be further processed to produce the LG3 peptide. Post-translationally, O-glycosylated. Contains three heparan sulfate chains. Also contains chondroitin sulfate.

The protein localises to the secreted. Its subcellular location is the extracellular space. It localises to the extracellular matrix. The protein resides in the basement membrane. Integral component of basement membranes. Component of the glomerular basement membrane (GBM), responsible for the fixed negative electrostatic membrane charge, and which provides a barrier which is both size- and charge-selective. It serves as an attachment substrate for cells. Plays essential roles in vascularization. Critical for normal heart development and for regulating the vascular response to injury. Also required for avascular cartilage development. Its function is as follows. Anti-angiogenic and anti-tumor peptide that inhibits endothelial cell migration, collagen-induced endothelial tube morphogenesis and blood vessel growth in the chorioallantoic membrane. Blocks endothelial cell adhesion to fibronectin and type I collagen. Anti-tumor agent in neovascularization. Interaction with its ligand, integrin alpha2/beta1, is required for the anti-angiogenic properties. Evokes a reduction in phosphorylation of receptor tyrosine kinases via alpha2/beta1 integrin-mediated activation of the tyrosine phosphatase, PTPN6. Functionally, has anti-angiogenic properties that require binding of calcium ions for full activity. The sequence is that of Basement membrane-specific heparan sulfate proteoglycan core protein (Hspg2) from Mus musculus (Mouse).